A 416-amino-acid polypeptide reads, in one-letter code: Peptide chain release factor subunit 1 (416 aa).

This sequence belongs to the eukaryotic release factor 1 family. Heterodimer of two subunits, one of which binds GTP.

It is found in the cytoplasm. Its function is as follows. Directs the termination of nascent peptide synthesis (translation) in response to the termination codons UAA, UAG and UGA. The chain is Peptide chain release factor subunit 1 from Halobacterium salinarum (strain ATCC 29341 / DSM 671 / R1).